The chain runs to 508 residues: Photosystem II CP47 reaction center protein (508 aa).

6 helical membrane-spanning segments follow: residues 21–36 (SVHI…WAGS), 101–115 (IVFS…IWHW), 140–156 (GIHL…FGAF), 203–218 (IAAG…FHLS), 237–252 (VLSS…AFVV), and 457–472 (TFAL…HGAR).

It belongs to the PsbB/PsbC family. PsbB subfamily. In terms of assembly, PSII is composed of 1 copy each of membrane proteins PsbA, PsbB, PsbC, PsbD, PsbE, PsbF, PsbH, PsbI, PsbJ, PsbK, PsbL, PsbM, PsbT, PsbX, PsbY, PsbZ, Psb30/Ycf12, at least 3 peripheral proteins of the oxygen-evolving complex and a large number of cofactors. It forms dimeric complexes. Binds multiple chlorophylls. PSII binds additional chlorophylls, carotenoids and specific lipids. serves as cofactor.

The protein localises to the plastid. The protein resides in the chloroplast thylakoid membrane. Its function is as follows. One of the components of the core complex of photosystem II (PSII). It binds chlorophyll and helps catalyze the primary light-induced photochemical processes of PSII. PSII is a light-driven water:plastoquinone oxidoreductase, using light energy to abstract electrons from H(2)O, generating O(2) and a proton gradient subsequently used for ATP formation. In Oryza sativa subsp. indica (Rice), this protein is Photosystem II CP47 reaction center protein.